A 144-amino-acid polypeptide reads, in one-letter code: uncharacterized protein (144 aa).

A coiled-coil region spans residues 48–119 (ELNKLKAKAD…KETEEPKMEL (72 aa)).

This is an uncharacterized protein from Archaeoglobus fulgidus (strain ATCC 49558 / DSM 4304 / JCM 9628 / NBRC 100126 / VC-16).